A 94-amino-acid polypeptide reads, in one-letter code: ESAT-6-like protein EsxL (94 aa).

The protein belongs to the WXG100 family. ESAT-6 subfamily. Strongly interacts with EsxK to form a heterodimeric complex under reducing conditions.

The protein resides in the secreted. The polypeptide is ESAT-6-like protein EsxL (Mycobacterium tuberculosis (strain CDC 1551 / Oshkosh)).